Reading from the N-terminus, the 334-residue chain is Nucleoid-associated protein YPN_2714 (334 aa).

The protein belongs to the YejK family.

The protein localises to the cytoplasm. It localises to the nucleoid. The sequence is that of Nucleoid-associated protein YPN_2714 from Yersinia pestis bv. Antiqua (strain Nepal516).